The primary structure comprises 428 residues: Histidine--tRNA ligase (428 aa).

The protein belongs to the class-II aminoacyl-tRNA synthetase family. As to quaternary structure, homodimer.

It localises to the cytoplasm. The enzyme catalyses tRNA(His) + L-histidine + ATP = L-histidyl-tRNA(His) + AMP + diphosphate + H(+). In Bordetella avium (strain 197N), this protein is Histidine--tRNA ligase.